A 474-amino-acid chain; its full sequence is Kynureninase 2 (474 aa).

Pyridoxal 5'-phosphate is bound by residues L144, T145, 172-175, D258, H261, and Y283; that span reads FPSD. N6-(pyridoxal phosphate)lysine is present on K284. Residues W323 and T351 each coordinate pyridoxal 5'-phosphate.

Belongs to the kynureninase family. In terms of assembly, homodimer. Pyridoxal 5'-phosphate is required as a cofactor.

The protein resides in the cytoplasm. It carries out the reaction L-kynurenine + H2O = anthranilate + L-alanine + H(+). The enzyme catalyses 3-hydroxy-L-kynurenine + H2O = 3-hydroxyanthranilate + L-alanine + H(+). Its pathway is amino-acid degradation; L-kynurenine degradation; L-alanine and anthranilate from L-kynurenine: step 1/1. It functions in the pathway cofactor biosynthesis; NAD(+) biosynthesis; quinolinate from L-kynurenine: step 2/3. Functionally, catalyzes the cleavage of L-kynurenine (L-Kyn) and L-3-hydroxykynurenine (L-3OHKyn) into anthranilic acid (AA) and 3-hydroxyanthranilic acid (3-OHAA), respectively. The protein is Kynureninase 2 (bna5-2) of Emericella nidulans (strain FGSC A4 / ATCC 38163 / CBS 112.46 / NRRL 194 / M139) (Aspergillus nidulans).